The following is a 180-amino-acid chain: MKCLLLALGLALMCGIQATNIPQTMQDLDLQEVAGKWHSVAMAASDISLLDSESAPLRVYIEKLRPTPEDNLEIILREGENKGCAEKKIFAEKTESPAEFKINYLDEDTVFALDTDYKNYLFLCMKNAATPGQSLVCQYLARTQMVDEEIMEKFRRALQPLPGRVQIVPDLTRMAERCRI.

The N-terminal stretch at 1 to 18 (MKCLLLALGLALMCGIQA) is a signal peptide. 2 cysteine pairs are disulfide-bonded: Cys-84–Cys-178 and Cys-124–Cys-137.

Belongs to the calycin superfamily. Lipocalin family. In terms of assembly, monomer.

The protein localises to the secreted. Functionally, lactoglobulin is the primary component of whey, it binds retinol and is probably involved in the transport of that molecule. The chain is Beta-lactoglobulin-1 (LGB1) from Equus caballus (Horse).